Here is a 109-residue protein sequence, read N- to C-terminus: Movement protein TGB2 (109 aa).

The Cytoplasmic segment spans residues 1–9; the sequence is MPLQPPPDH. A helical transmembrane segment spans residues 10 to 30; that stretch reads TWAVRIIALGLAVTALIFTST. Topologically, residues 31–71 are lumenal; it reads RDTSRHVGDPSHSLPFGGHYRDGSKVIHYNSPRSSKPSNHT. Residues 72-92 traverse the membrane as a helical segment; it reads PYLLFAPIGIILLIHALHRLG. Over 93–109 the chain is Cytoplasmic; it reads NSAHICRCTHCMPHSQT.

This sequence belongs to the Tymovirales TGBp2 protein family.

It is found in the host endoplasmic reticulum membrane. In terms of biological role, plays a role in viral cell-to-cell propagation, by facilitating genome transport to neighboring plant cells through plasmosdesmata,. The chain is Movement protein TGB2 from Citrus (ICRSV).